Consider the following 131-residue polypeptide: D-ribose pyranase (131 aa).

The active-site Proton donor is the His-20. Substrate-binding positions include Asp-28, His-98, and 120–122 (YAN).

This sequence belongs to the RbsD / FucU family. RbsD subfamily. In terms of assembly, homodecamer.

The protein localises to the cytoplasm. The enzyme catalyses beta-D-ribopyranose = beta-D-ribofuranose. It participates in carbohydrate metabolism; D-ribose degradation; D-ribose 5-phosphate from beta-D-ribopyranose: step 1/2. In terms of biological role, catalyzes the interconversion of beta-pyran and beta-furan forms of D-ribose. In Clostridium perfringens (strain 13 / Type A), this protein is D-ribose pyranase.